The following is a 296-amino-acid chain: Large ribosomal subunit protein uL15m (296 aa).

A mitochondrion-targeting transit peptide spans 1–20 (MAASGGSGGKATELLRCLPR). The interval 25 to 66 (NLRPNPGARHREKRRGRGIHGGRKSGRGHKGETQRGNQPRLG) is disordered. Residues 32 to 52 (ARHREKRRGRGIHGGRKSGRG) are compositionally biased toward basic residues.

It belongs to the universal ribosomal protein uL15 family. In terms of assembly, component of the mitochondrial ribosome large subunit (39S) which comprises a 16S rRNA and about 50 distinct proteins.

Its subcellular location is the mitochondrion. This Xenopus laevis (African clawed frog) protein is Large ribosomal subunit protein uL15m (mrpl15).